The sequence spans 95 residues: Co-chaperonin GroES (95 aa).

It belongs to the GroES chaperonin family. Heptamer of 7 subunits arranged in a ring. Interacts with the chaperonin GroEL.

It is found in the cytoplasm. Functionally, together with the chaperonin GroEL, plays an essential role in assisting protein folding. The GroEL-GroES system forms a nano-cage that allows encapsulation of the non-native substrate proteins and provides a physical environment optimized to promote and accelerate protein folding. GroES binds to the apical surface of the GroEL ring, thereby capping the opening of the GroEL channel. The polypeptide is Co-chaperonin GroES (Xylella fastidiosa (strain M23)).